Reading from the N-terminus, the 243-residue chain is Juxtaposed with another zinc finger protein 1 (243 aa).

The C2H2-type 1 zinc-finger motif lies at 12–37; it reads NTCRFGGCGLHFPTLADLIEHIEDNH. Positions 39–79 are required for interaction with NR2C2; sequence DTDPRVLEKQELQQPTYVALSYINRFMTDAARREQESLKKK. Residues 89–108 are compositionally biased toward polar residues; sequence SSSVSRGNVSTPPRHSSGSL. A disordered region spans residues 89 to 151; it reads SSSVSRGNVS…SDSDESWTTE (63 aa). Phosphothreonine is present on residues threonine 109 and threonine 113. Positions 118–130 are enriched in low complexity; it reads PSSSFRSSTPTGS. Positions 131-148 are enriched in acidic residues; the sequence is EYDEEEVDYEESDSDESW. The C2H2-type 2 zinc-finger motif lies at 173-198; the sequence is FACPVPGCKKRYKNVNGIKYHAKNGH. Residues 208–230 form a C2H2-type 3; degenerate zinc finger; sequence FKCRCGKSYKTAQGLRHHTINFH.

As to quaternary structure, interacts with NR2C2 (via ligand-binding region). Highest expression in testis with moderate levels in colon, placenta, prostate and ovary and low levels in brain, spleen, liver and small intestine.

The protein resides in the nucleus. In terms of biological role, acts as a transcriptional corepressor of orphan nuclear receptor NR2C2. Inhibits expression of the gluconeogenesis enzyme PCK2 through inhibition of NR2C2 activity. Also involved in transcriptional activation of NAMPT by promoting expression of PPARA and PPARD. Plays a role in lipid metabolism by suppressing lipogenesis, increasing lipolysis and decreasing lipid accumulation in adipose tissue. Plays a role in glucose homeostasis by improving glucose metabolism and insulin sensitivity. This chain is Juxtaposed with another zinc finger protein 1, found in Homo sapiens (Human).